We begin with the raw amino-acid sequence, 633 residues long: 1-deoxy-D-xylulose-5-phosphate synthase (633 aa).

The segment at 1–22 is disordered; it reads MPTTFHEIPRKRPTTPLLDRAQ. Thiamine diphosphate contacts are provided by residues His87 and 128–130; that span reads GHS. Asp159 is a binding site for Mg(2+). Thiamine diphosphate-binding positions include 160–161, Asn188, Phe295, and Glu378; that span reads GA. Asn188 lines the Mg(2+) pocket.

It belongs to the transketolase family. DXPS subfamily. Homodimer. Mg(2+) is required as a cofactor. It depends on thiamine diphosphate as a cofactor.

It catalyses the reaction D-glyceraldehyde 3-phosphate + pyruvate + H(+) = 1-deoxy-D-xylulose 5-phosphate + CO2. It functions in the pathway metabolic intermediate biosynthesis; 1-deoxy-D-xylulose 5-phosphate biosynthesis; 1-deoxy-D-xylulose 5-phosphate from D-glyceraldehyde 3-phosphate and pyruvate: step 1/1. Functionally, catalyzes the acyloin condensation reaction between C atoms 2 and 3 of pyruvate and glyceraldehyde 3-phosphate to yield 1-deoxy-D-xylulose-5-phosphate (DXP). This Pseudomonas fluorescens (strain ATCC BAA-477 / NRRL B-23932 / Pf-5) protein is 1-deoxy-D-xylulose-5-phosphate synthase.